The following is a 253-amino-acid chain: Endonuclease NucS (253 aa).

Belongs to the NucS endonuclease family.

It localises to the cytoplasm. Functionally, cleaves both 3' and 5' ssDNA extremities of branched DNA structures. This Pyrococcus horikoshii (strain ATCC 700860 / DSM 12428 / JCM 9974 / NBRC 100139 / OT-3) protein is Endonuclease NucS.